Here is a 596-residue protein sequence, read N- to C-terminus: UvrABC system protein C (596 aa).

The GIY-YIG domain maps to 16-95 (SSPGVYRFYS…IKENKPKYNV (80 aa)). The UVR domain occupies 209-244 (SSVKKYYQEKMLSAAEDMQFEKAQFFKERYNSVLGL).

The protein belongs to the UvrC family. In terms of assembly, interacts with UvrB in an incision complex.

The protein localises to the cytoplasm. In terms of biological role, the UvrABC repair system catalyzes the recognition and processing of DNA lesions. UvrC both incises the 5' and 3' sides of the lesion. The N-terminal half is responsible for the 3' incision and the C-terminal half is responsible for the 5' incision. The protein is UvrABC system protein C of Cytophaga hutchinsonii (strain ATCC 33406 / DSM 1761 / CIP 103989 / NBRC 15051 / NCIMB 9469 / D465).